The primary structure comprises 168 residues: Peptide deformylase (168 aa).

The Fe cation site is built by cysteine 91 and histidine 133. The active site involves glutamate 134. Residue histidine 137 coordinates Fe cation.

Belongs to the polypeptide deformylase family. The cofactor is Fe(2+).

The enzyme catalyses N-terminal N-formyl-L-methionyl-[peptide] + H2O = N-terminal L-methionyl-[peptide] + formate. In terms of biological role, removes the formyl group from the N-terminal Met of newly synthesized proteins. Requires at least a dipeptide for an efficient rate of reaction. N-terminal L-methionine is a prerequisite for activity but the enzyme has broad specificity at other positions. This Endomicrobium trichonymphae protein is Peptide deformylase.